We begin with the raw amino-acid sequence, 100 residues long: Urease subunit gamma (100 aa).

It belongs to the urease gamma subunit family. Heterotrimer of UreA (gamma), UreB (beta) and UreC (alpha) subunits. Three heterotrimers associate to form the active enzyme.

It localises to the cytoplasm. The catalysed reaction is urea + 2 H2O + H(+) = hydrogencarbonate + 2 NH4(+). Its pathway is nitrogen metabolism; urea degradation; CO(2) and NH(3) from urea (urease route): step 1/1. The sequence is that of Urease subunit gamma from Staphylococcus xylosus.